We begin with the raw amino-acid sequence, 224 residues long: MRIFYGLLAFLVARQHDAQAIQARSDKEQPQTVVSGTAVQSVVPVQAQLGSGMGPSSSSSSASSASGGAGNSAFYPLGPNVMCSFLPRDFLDCKDPVDHRENATAQQEKKYGCLKFGGSTYEEVEHAMVWCTVFADIECYGNRTFLRAGVPCVRYTDHYFVTTLIYSMLLGFLGMDRFCLGQTGTAVGKLLTMGGVGVWWIIDVILLITNNLLPEDGSNWNPYV.

Positions 1–18 are cleaved as a signal peptide; sequence MRIFYGLLAFLVARQHDA. Topologically, residues 19–154 are extracellular; sequence QAIQARSDKE…FLRAGVPCVR (136 aa). N-linked (GlcNAc...) asparagine glycans are attached at residues N102 and N142. A helical transmembrane segment spans residues 155–175; that stretch reads YTDHYFVTTLIYSMLLGFLGM. In terms of domain architecture, TM2 spans 157 to 205; it reads DHYFVTTLIYSMLLGFLGMDRFCLGQTGTAVGKLLTMGGVGVWWIIDVI. Residues 176 to 189 lie on the Cytoplasmic side of the membrane; sequence DRFCLGQTGTAVGK. A helical membrane pass occupies residues 190-210; sequence LLTMGGVGVWWIIDVILLITN. The Extracellular portion of the chain corresponds to 211-224; sequence NLLPEDGSNWNPYV.

It belongs to the TM2 family.

The protein resides in the membrane. Positive regulator of Notch signaling. Maternal neurogenic factor involved in Notch signaling-dependent neuroectodermal specification during early embryogenesis. Functions cooperatively with amx/TM2D3 and bisc/TM2D1. The protein is TM2 domain-containing protein amaretto of Drosophila melanogaster (Fruit fly).